The primary structure comprises 720 residues: Phosphoribosylformylglycinamidine synthase subunit PurL (720 aa).

The active site involves histidine 34. Tyrosine 37 is an ATP binding site. Glutamate 83 provides a ligand contact to Mg(2+). Substrate-binding positions include 84–87 and arginine 106; that span reads SHNH. Histidine 85 serves as the catalytic Proton acceptor. Aspartate 107 contributes to the Mg(2+) binding site. Glutamine 231 provides a ligand contact to substrate. Aspartate 259 is a Mg(2+) binding site. 303–305 serves as a coordination point for substrate; sequence ESQ. Residues aspartate 480 and glycine 517 each contribute to the ATP site. Asparagine 518 contributes to the Mg(2+) binding site. Serine 520 is a substrate binding site.

Belongs to the FGAMS family. In terms of assembly, monomer. Part of the FGAM synthase complex composed of 1 PurL, 1 PurQ and 2 PurS subunits.

The protein localises to the cytoplasm. It carries out the reaction N(2)-formyl-N(1)-(5-phospho-beta-D-ribosyl)glycinamide + L-glutamine + ATP + H2O = 2-formamido-N(1)-(5-O-phospho-beta-D-ribosyl)acetamidine + L-glutamate + ADP + phosphate + H(+). Its pathway is purine metabolism; IMP biosynthesis via de novo pathway; 5-amino-1-(5-phospho-D-ribosyl)imidazole from N(2)-formyl-N(1)-(5-phospho-D-ribosyl)glycinamide: step 1/2. In terms of biological role, part of the phosphoribosylformylglycinamidine synthase complex involved in the purines biosynthetic pathway. Catalyzes the ATP-dependent conversion of formylglycinamide ribonucleotide (FGAR) and glutamine to yield formylglycinamidine ribonucleotide (FGAM) and glutamate. The FGAM synthase complex is composed of three subunits. PurQ produces an ammonia molecule by converting glutamine to glutamate. PurL transfers the ammonia molecule to FGAR to form FGAM in an ATP-dependent manner. PurS interacts with PurQ and PurL and is thought to assist in the transfer of the ammonia molecule from PurQ to PurL. The polypeptide is Phosphoribosylformylglycinamidine synthase subunit PurL (Haloarcula marismortui (strain ATCC 43049 / DSM 3752 / JCM 8966 / VKM B-1809) (Halobacterium marismortui)).